Consider the following 234-residue polypeptide: Large ribosomal subunit protein uL1 (234 aa).

It belongs to the universal ribosomal protein uL1 family. Part of the 50S ribosomal subunit.

Functionally, binds directly to 23S rRNA. The L1 stalk is quite mobile in the ribosome, and is involved in E site tRNA release. Protein L1 is also a translational repressor protein, it controls the translation of the L11 operon by binding to its mRNA. The polypeptide is Large ribosomal subunit protein uL1 (Anaeromyxobacter dehalogenans (strain 2CP-1 / ATCC BAA-258)).